The following is a 308-amino-acid chain: tRNA dimethylallyltransferase (308 aa).

An ATP-binding site is contributed by 10-17; that stretch reads GPTGVGKT. 12–17 contacts substrate; that stretch reads TGVGKT. Residues 35–38 form an interaction with substrate tRNA region; the sequence is DSRQ.

Belongs to the IPP transferase family. In terms of assembly, monomer. The cofactor is Mg(2+).

The enzyme catalyses adenosine(37) in tRNA + dimethylallyl diphosphate = N(6)-dimethylallyladenosine(37) in tRNA + diphosphate. Functionally, catalyzes the transfer of a dimethylallyl group onto the adenine at position 37 in tRNAs that read codons beginning with uridine, leading to the formation of N6-(dimethylallyl)adenosine (i(6)A). The polypeptide is tRNA dimethylallyltransferase (Fervidobacterium nodosum (strain ATCC 35602 / DSM 5306 / Rt17-B1)).